We begin with the raw amino-acid sequence, 212 residues long: uncharacterized protein (212 aa).

Residues G53, E74, and D97 each coordinate S-adenosyl-L-methionine.

This sequence belongs to the methyltransferase superfamily. YrrT family.

Its function is as follows. Could be a S-adenosyl-L-methionine-dependent methyltransferase. This is an uncharacterized protein from Bacillus cereus (strain ZK / E33L).